A 68-amino-acid polypeptide reads, in one-letter code: Conotoxin VnMMSK-01 (68 aa).

The first 20 residues, 1 to 20 (MMSKLGVLLTICLLLFPLTA), serve as a signal peptide directing secretion. A propeptide spanning residues 21–50 (VPMDGDQPADLPALRTQDFEPERSPWFDPV) is cleaved from the precursor. Intrachain disulfides connect C53–C65, C54–C61, and C58–C64. Position 63 is a 4-hydroxyproline (P63).

The protein belongs to the conotoxin M superfamily. As to expression, expressed by the venom duct.

It is found in the secreted. In Conus ventricosus (Mediterranean cone), this protein is Conotoxin VnMMSK-01.